The primary structure comprises 253 residues: Large ribosomal subunit protein uL4 (253 aa).

Residues 78–107 (SRAARVPHAKGGRRAHPPKPEADRSEKVNT) form a disordered region. A compositionally biased stretch (basic residues) spans 82–94 (RVPHAKGGRRAHP). Residues 95–107 (PKPEADRSEKVNT) are compositionally biased toward basic and acidic residues.

The protein belongs to the universal ribosomal protein uL4 family. In terms of assembly, part of the 50S ribosomal subunit.

Functionally, one of the primary rRNA binding proteins, this protein initially binds near the 5'-end of the 23S rRNA. It is important during the early stages of 50S assembly. It makes multiple contacts with different domains of the 23S rRNA in the assembled 50S subunit and ribosome. In terms of biological role, forms part of the polypeptide exit tunnel. The polypeptide is Large ribosomal subunit protein uL4 (Methanosarcina acetivorans (strain ATCC 35395 / DSM 2834 / JCM 12185 / C2A)).